Here is a 138-residue protein sequence, read N- to C-terminus: Large ribosomal subunit protein uL16 (138 aa).

The segment covering 1-19 (MLIPRKVAHRKQHHPKRTG) has biased composition (basic residues). The segment at 1 to 22 (MLIPRKVAHRKQHHPKRTGAAK) is disordered.

This sequence belongs to the universal ribosomal protein uL16 family. As to quaternary structure, part of the 50S ribosomal subunit.

Binds 23S rRNA and is also seen to make contacts with the A and possibly P site tRNAs. In Parafrankia sp. (strain EAN1pec), this protein is Large ribosomal subunit protein uL16.